Reading from the N-terminus, the 224-residue chain is Peroxiredoxin-6 (224 aa).

A Thioredoxin domain is found at 4-168 (LLLGDEAPNF…ILRVVDSLQL (165 aa)). Residues 30–39 (DSWGILFSHP) are required and sufficient for targeting to lysosomes and lamellar bodies. Residue Cys46 is the Cysteine sulfenic acid (-SOH) intermediate; for peroxidase activity of the active site. At Tyr88 the chain carries Phosphotyrosine. Asp139 (for phospholipase activity) is an active-site residue. At Thr176 the chain carries Phosphothreonine; by MAPK.

It belongs to the peroxiredoxin family. Prx6 subfamily. Homodimer. Interacts with GSTP1; mediates PRDX6 glutathionylation and regeneration. Post-translationally, irreversibly inactivated by overoxidation of Cys-46 to sulfinic acid (Cys-SO(2)H) and sulfonic acid (Cys-SO(3)H) forms upon oxidative stress. In terms of processing, phosphorylation at Thr-176 by MAP kinases increases the phospholipase activity of the enzyme. The phosphorylated form exhibits a greater lysophosphatidylcholine acyltransferase activity compared to the non-phosphorylated form.

Its subcellular location is the cytoplasm. It is found in the lysosome. The catalysed reaction is a hydroperoxide + 2 glutathione = an alcohol + glutathione disulfide + H2O. The enzyme catalyses a 1,2-diacyl-sn-glycero-3-phosphocholine + H2O = a 1-acyl-sn-glycero-3-phosphocholine + a fatty acid + H(+). It carries out the reaction a 1-acyl-sn-glycero-3-phosphocholine + an acyl-CoA = a 1,2-diacyl-sn-glycero-3-phosphocholine + CoA. It catalyses the reaction 1-hexadecanoyl-sn-glycero-3-phosphocholine + hexadecanoyl-CoA = 1,2-dihexadecanoyl-sn-glycero-3-phosphocholine + CoA. The catalysed reaction is 1,2-dihexadecanoyl-sn-glycero-3-phosphocholine + H2O = 1-hexadecanoyl-sn-glycero-3-phosphocholine + hexadecanoate + H(+). Its function is as follows. Thiol-specific peroxidase that catalyzes the reduction of hydrogen peroxide and organic hydroperoxides to water and alcohols, respectively. Can reduce H(2)O(2) and short chain organic, fatty acid, and phospholipid hydroperoxides. Also has phospholipase activity, and can therefore either reduce the oxidized sn-2 fatty acyl group of phospholipids (peroxidase activity) or hydrolyze the sn-2 ester bond of phospholipids (phospholipase activity). These activities are dependent on binding to phospholipids at acidic pH and to oxidized phospholipds at cytosolic pH. Plays a role in cell protection against oxidative stress by detoxifying peroxides and in phospholipid homeostasis. Exhibits acyl-CoA-dependent lysophospholipid acyltransferase which mediates the conversion of lysophosphatidylcholine (1-acyl-sn-glycero-3-phosphocholine or LPC) into phosphatidylcholine (1,2-diacyl-sn-glycero-3-phosphocholine or PC). Shows a clear preference for LPC as the lysophospholipid and for palmitoyl CoA as the fatty acyl substrate. The sequence is that of Peroxiredoxin-6 (PRDX6) from Gallus gallus (Chicken).